A 301-amino-acid polypeptide reads, in one-letter code: Methionyl-tRNA formyltransferase (301 aa).

109–112 (SLLP) provides a ligand contact to (6S)-5,6,7,8-tetrahydrofolate.

Belongs to the Fmt family.

The enzyme catalyses L-methionyl-tRNA(fMet) + (6R)-10-formyltetrahydrofolate = N-formyl-L-methionyl-tRNA(fMet) + (6S)-5,6,7,8-tetrahydrofolate + H(+). In terms of biological role, attaches a formyl group to the free amino group of methionyl-tRNA(fMet). The formyl group appears to play a dual role in the initiator identity of N-formylmethionyl-tRNA by promoting its recognition by IF2 and preventing the misappropriation of this tRNA by the elongation apparatus. The sequence is that of Methionyl-tRNA formyltransferase from Novosphingobium aromaticivorans (strain ATCC 700278 / DSM 12444 / CCUG 56034 / CIP 105152 / NBRC 16084 / F199).